The sequence spans 394 residues: Trans-enoyl reductase fumoC (394 aa).

62 to 65 provides a ligand contact to NADP(+); it reads VDGK. 152-159 is a substrate binding site; the sequence is ASLASVGM. NADP(+)-binding positions include 224–227, Tyr-242, and 289–290; these read SSSS and LD. Substrate is bound at residue 309–313; sequence TLTQF. 378–379 provides a ligand contact to NADP(+); it reads VK.

The protein belongs to the zinc-containing alcohol dehydrogenase family. Monomer.

Its pathway is secondary metabolite biosynthesis. In terms of biological role, trans-enoyl reductase; part of the gene cluster that mediates the biosynthesis of fumosorinone, a 2-pyridone alkaloid that acts as an inhibitor of protein tyrosine phosphatase 1B which is implicated asa negative regulator of insulin receptor signaling and a potential drug target for the treatment of type II diabetes and other associated metabolic syndromes. The polyketide-amino acid backbone of fumosorinone is first assembled by the PKS-NRPS hybrid fumoS. The PKS modules condense one acetyl-CoA starter unit with 7 malonyl-CoA units, programmed C-methylations occurring after the first 3 and the sixth extensions, and cycles of full reduction occurring after the first 2 extensions. Because fumoS lacks a designated enoyl reductase (ER) domain, the required activity is provided the enoyl reductase fumoC. Upon formation of the polyketide backbone on the thiotemplate, the polyketide is transferred to the NRPS module and linked to tyrosine to produce the acyltetramic acid intermediate called prefumosorinone A. The cytochrome P450 monooxygenase fumoA then probably catalyzes an unprecedented oxidative ring expansion of prefumosorinone A to form prefumosorinone B which contains the 2-pyridone core of fumosorinone. The cytochrome P450 monooxygenase fumoB might hydroxylate the nitrogen of prefumosorinone B, but not the acyltetramic acid prefumosorinone A, to form fumosorinone. This Cordyceps fumosorosea (strain ARSEF 2679) (Isaria fumosorosea) protein is Trans-enoyl reductase fumoC.